A 504-amino-acid polypeptide reads, in one-letter code: Xylose import ATP-binding protein XylG (504 aa).

2 consecutive ABC transporter domains span residues 6-243 and 262-504; these read LEMQ…VGRE and VRNF…TGGK. 38–45 lines the ATP pocket; that stretch reads GENGAGKS.

This sequence belongs to the ABC transporter superfamily. Xylose importer (TC 3.A.1.2.4) family. As to quaternary structure, the complex is composed of two ATP-binding proteins (XylG), two transmembrane proteins (XylH) and a solute-binding protein (XylF).

It is found in the cell membrane. It catalyses the reaction D-xylose(out) + ATP + H2O = D-xylose(in) + ADP + phosphate + H(+). In terms of biological role, part of the ABC transporter complex XylFGH involved in xylose import. Responsible for energy coupling to the transport system. The sequence is that of Xylose import ATP-binding protein XylG from Moorella thermoacetica (strain ATCC 39073 / JCM 9320).